Reading from the N-terminus, the 426-residue chain is Protein arginine methyltransferase NDUFAF7 homolog, mitochondrial (426 aa).

This sequence belongs to the NDUFAF7 family.

It localises to the mitochondrion. The enzyme catalyses L-arginyl-[protein] + 2 S-adenosyl-L-methionine = N(omega),N(omega)'-dimethyl-L-arginyl-[protein] + 2 S-adenosyl-L-homocysteine + 2 H(+). In terms of biological role, arginine methyltransferase involved in the assembly or stability of mitochondrial NADH:ubiquinone oxidoreductase complex (complex I). In Caenorhabditis elegans, this protein is Protein arginine methyltransferase NDUFAF7 homolog, mitochondrial.